Here is a 180-residue protein sequence, read N- to C-terminus: Probable nicotinate-nucleotide adenylyltransferase (180 aa).

This sequence belongs to the NadD family.

The enzyme catalyses nicotinate beta-D-ribonucleotide + ATP + H(+) = deamido-NAD(+) + diphosphate. Its pathway is cofactor biosynthesis; NAD(+) biosynthesis; deamido-NAD(+) from nicotinate D-ribonucleotide: step 1/1. Functionally, catalyzes the reversible adenylation of nicotinate mononucleotide (NaMN) to nicotinic acid adenine dinucleotide (NaAD). The sequence is that of Probable nicotinate-nucleotide adenylyltransferase from Pelagibacter ubique (strain HTCC1062).